The chain runs to 762 residues: 5-methyltetrahydropteroyltriglutamate--homocysteine methyltransferase (762 aa).

Residues R18–K21 and K112 contribute to the 5-methyltetrahydropteroyltri-L-glutamate site. Residues I435–S437 and E488 each bind L-homocysteine. L-methionine contacts are provided by residues I435–S437 and E488. 5-methyltetrahydropteroyltri-L-glutamate is bound by residues R519–C520 and W565. Position 603 (D603) interacts with L-homocysteine. D603 contributes to the L-methionine binding site. 5-methyltetrahydropteroyltri-L-glutamate is bound at residue E609. Residues H645, C647, and E669 each contribute to the Zn(2+) site. H698 acts as the Proton donor in catalysis. C730 is a Zn(2+) binding site.

It belongs to the vitamin-B12 independent methionine synthase family. It depends on Zn(2+) as a cofactor.

It catalyses the reaction 5-methyltetrahydropteroyltri-L-glutamate + L-homocysteine = tetrahydropteroyltri-L-glutamate + L-methionine. The protein operates within amino-acid biosynthesis; L-methionine biosynthesis via de novo pathway; L-methionine from L-homocysteine (MetE route): step 1/1. In terms of biological role, catalyzes the transfer of a methyl group from 5-methyltetrahydrofolate to homocysteine resulting in methionine formation. The sequence is that of 5-methyltetrahydropteroyltriglutamate--homocysteine methyltransferase from Bacillus velezensis (strain DSM 23117 / BGSC 10A6 / LMG 26770 / FZB42) (Bacillus amyloliquefaciens subsp. plantarum).